The primary structure comprises 159 residues: Urease accessory protein UreE (159 aa).

Positions 140–159 (GAYHGTGHHHHGHGHDPHHG) are disordered.

It belongs to the UreE family.

Its subcellular location is the cytoplasm. Involved in urease metallocenter assembly. Binds nickel. Probably functions as a nickel donor during metallocenter assembly. In Sinorhizobium fredii (strain NBRC 101917 / NGR234), this protein is Urease accessory protein UreE.